Here is a 199-residue protein sequence, read N- to C-terminus: Transgelin-2 (199 aa).

Position 2 is an N-acetylalanine (A2). S11 carries the phosphoserine modification. An N6-acetyllysine mark is found at K17 and K20. One can recognise a Calponin-homology (CH) domain in the interval 24–136 (ADLEQILIQW…RTLMNLGGLA (113 aa)). Phosphoserine is present on S163. K171 participates in a covalent cross-link: Glycyl lysine isopeptide (Lys-Gly) (interchain with G-Cter in SUMO2). The Calponin-like repeat unit spans residues 174–199 (IGLQMGTNRGASQAGMTGYGMPRQIL). T180 carries the phosphothreonine modification. R182 and R196 each carry omega-N-methylarginine.

The protein belongs to the calponin family.

The protein is Transgelin-2 (TAGLN2) of Bos taurus (Bovine).